The primary structure comprises 261 residues: uncharacterized protein (261 aa).

The N-terminal stretch at 1-22 (MIHSKKLTLGICLVLLIILIGG) is a signal peptide. C23 is lipidated: N-palmitoyl cysteine. The S-diacylglycerol cysteine moiety is linked to residue C23.

Belongs to the staphylococcal tandem lipoprotein family.

It is found in the cell membrane. This is an uncharacterized protein from Staphylococcus aureus (strain NCTC 8325 / PS 47).